Here is a 412-residue protein sequence, read N- to C-terminus: Pentatricopeptide repeat-containing protein At3g60980, mitochondrial (412 aa).

Residues 1-18 constitute a mitochondrion transit peptide; the sequence is MSLIGRLNLGRRFCTAVP. PPR repeat units follow at residues 69 to 104, 105 to 139, 143 to 178, 179 to 213, 230 to 264, 266 to 296, 305 to 339, 344 to 371, and 373 to 407; these read TTTI…NLRP, NSHC…GQVH, SDDS…TTYP, DHVA…FLIA, VAFL…NRLL, CAET…LLDK, DSDT…NDYL, IITR…DFGY, and DVNT…TLKE.

The protein belongs to the PPR family. P subfamily.

The protein resides in the mitochondrion. The sequence is that of Pentatricopeptide repeat-containing protein At3g60980, mitochondrial from Arabidopsis thaliana (Mouse-ear cress).